The sequence spans 375 residues: Nucleosome assembly protein 1-like 4 (375 aa).

Residues 1-28 (MAENSLSDGGPADSVEAAKNASNTEKLT) are disordered. A2 bears the N-acetylalanine mark. Phosphoserine is present on residues S5, S7, and S49. T51 carries the phosphothreonine modification. Phosphoserine is present on residues S53 and S54. T58 bears the Phosphothreonine mark. At K105 the chain carries N6-acetyllysine. Position 125 is a phosphoserine (S125). K146 carries the post-translational modification N6-acetyllysine. Residues 265 to 271 (IKKKQKH) carry the Nuclear localization signal motif. Phosphoserine is present on S304. The disordered stretch occupies residues 339–375 (AIEDDDNFEEGEEGEEEELEGDEEGEDEDDADVNPKV).

Belongs to the nucleosome assembly protein (NAP) family. As to quaternary structure, interacts with core (H2A, H2B, H3, H4) and linker (H1) histones. Post-translationally, polyglutamylated and polyglycylated. These 2 modifications occur exclusively on glutamate residues and result in either polyglutamate or polyglycine chains on the gamma-carboxyl group. Both modifications can coexist on the same protein on adjacent residues, and lowering polyglycylation levels increases polyglutamylation, and reciprocally. Polyglutamylated by TTLL4. Phosphorylated at the G0/G1 boundary but it is not phosphorylated in S-phase. Phosphorylated protein remains in the cytoplasm in a complex with histones during the G0/G1 transition, whereas dephosphorylation triggers its transport into the nucleus at the G1/S-boundary.

Its subcellular location is the nucleus. The protein resides in the cytoplasm. Functionally, acts as a histone chaperone in nucleosome assembly. In condensing spermatids, mediates the loading of the heterodimer composed of histones H2AB1 and H2BC1/TH2B onto the nucleosomes, thereby promoting the replacement of histones to protamine in male germ cells. The sequence is that of Nucleosome assembly protein 1-like 4 (Nap1l4) from Mus musculus (Mouse).